We begin with the raw amino-acid sequence, 181 residues long: NADH-quinone oxidoreductase subunit I (181 aa).

2 4Fe-4S ferredoxin-type domains span residues T51–S80 and K90–D119. 8 residues coordinate [4Fe-4S] cluster: C60, C63, C66, C70, C99, C102, C105, and C109.

This sequence belongs to the complex I 23 kDa subunit family. As to quaternary structure, NDH-1 is composed of 13 different subunits. Subunits NuoA, H, J, K, L, M, N constitute the membrane sector of the complex. It depends on [4Fe-4S] cluster as a cofactor.

Its subcellular location is the cell membrane. The catalysed reaction is a quinone + NADH + 5 H(+)(in) = a quinol + NAD(+) + 4 H(+)(out). Functionally, NDH-1 shuttles electrons from NADH, via FMN and iron-sulfur (Fe-S) centers, to quinones in the respiratory chain. The immediate electron acceptor for the enzyme in this species is believed to be ubiquinone. Couples the redox reaction to proton translocation (for every two electrons transferred, four hydrogen ions are translocated across the cytoplasmic membrane), and thus conserves the redox energy in a proton gradient. This is NADH-quinone oxidoreductase subunit I from Buchnera aphidicola subsp. Cinara cedri (strain Cc).